The primary structure comprises 455 residues: Kynurenine--oxoglutarate transaminase 3 (455 aa).

Gly72 is a substrate binding site. Lys117 carries the post-translational modification N6-acetyllysine; alternate. Lys117 carries the post-translational modification N6-succinyllysine; alternate. Asn219 contributes to the substrate binding site. Position 281 is an N6-(pyridoxal phosphate)lysine (Lys281). Arg430 contacts substrate.

Belongs to the class-I pyridoxal-phosphate-dependent aminotransferase family. In terms of assembly, homodimer. Pyridoxal 5'-phosphate serves as cofactor. Widely expressed, with higher expression levels in liver, kidney, heart and neuroendocrine tissues.

The catalysed reaction is L-kynurenine + 2-oxoglutarate = kynurenate + L-glutamate + H2O. It carries out the reaction L-kynurenine + glyoxylate = kynurenate + glycine + H2O. The enzyme catalyses 3-hydroxy-L-kynurenine + glyoxylate = xanthurenate + glycine + H2O. It catalyses the reaction an S-substituted L-cysteine + H2O = a thiol + pyruvate + NH4(+). It participates in amino-acid degradation; L-kynurenine degradation; kynurenate from L-kynurenine: step 1/2. With respect to regulation, kynurenine transamination is competitively inhibited by cysteine, glutamine, histidine, methionine, leucine, or phenylalanine. In terms of biological role, catalyzes the irreversible transamination of the L-tryptophan metabolite L-kynurenine to form kynurenic acid (KA), an intermediate in the tryptophan catabolic pathway which is also a broad spectrum antagonist of the three ionotropic excitatory amino acid receptors among others. May catalyze the beta-elimination of S-conjugates and Se-conjugates of L-(seleno)cysteine, resulting in the cleavage of the C-S or C-Se bond. Has transaminase activity towards L-kynurenine, tryptophan, phenylalanine, serine, cysteine, methionine, histidine, glutamine and asparagine with glyoxylate as an amino group acceptor (in vitro). Has lower activity with 2-oxoglutarate as amino group acceptor (in vitro). In Mus musculus (Mouse), this protein is Kynurenine--oxoglutarate transaminase 3 (Kyat3).